Reading from the N-terminus, the 1261-residue chain is Myosin-1 (1261 aa).

The disordered stretch occupies residues 1–39 (MGHSRRPVGGEKKSRGFGRSKVADVGDGRQAGKPQVKKA). Residues 49–728 (IGVSDLTLLS…TLFALEAMRD (680 aa)) enclose the Myosin motor domain. Residue 142 to 149 (GESGAGKT) participates in ATP binding. The residue at position 370 (Ser-370) is a Phosphoserine. The tract at residues 417-499 (SIGILDIYGF…PGVFAALNDA (83 aa)) is actin-binding. 2 IQ domains span residues 732–752 (HNMA…RIEC) and 753–778 (AIRI…QGHQ). Residues 786-973 (RRRMSLLGSR…KSHTIHTSPG (188 aa)) enclose the TH1 domain. Disordered stretches follow at residues 956–1093 (ASPN…KALY) and 1139–1261 (YLEE…DDEW). Pro residues-rich tracts occupy residues 1019–1029 (RPTPKPQPLPQ), 1038–1052 (IPAP…PVPQ), 1072–1084 (APPP…PPAP), and 1147–1159 (TPKP…PPAA). The SH3 domain maps to 1084-1145 (PKKATAKALY…PQAYLEEQVA (62 aa)). The span at 1160–1181 (PRASPVPSANGAAATAAAAKAK) shows a compositional bias: low complexity. Positions 1212-1233 (VSMNSQDSSGGSGRGTPNSTSN) are enriched in polar residues. The span at 1234–1243 (ASLAGGLAEA) shows a compositional bias: low complexity.

This sequence belongs to the TRAFAC class myosin-kinesin ATPase superfamily. Myosin family. In terms of processing, phosphorylation of the TEDS site (Ser-370) is required for the polarization of the actin cytoskeleton. Phosphorylation probably activates the myosin-I ATPase activity.

It is found in the cytoplasm. The protein localises to the cytoskeleton. The protein resides in the actin patch. Its function is as follows. Type-I myosin implicated in the organization of the actin cytoskeleton. Required for proper actin cytoskeleton polarization. At the cell cortex, assembles in patch-like structures together with proteins from the actin-polymerizing machinery and promotes actin assembly. Functions as actin nucleation-promoting factor (NPF) for the Arp2/3 complex. Plays an important role in polarized growth, spore germination, hyphal morphogenesis, and septal wall formation. In Aspergillus oryzae (strain ATCC 42149 / RIB 40) (Yellow koji mold), this protein is Myosin-1 (myoA).